We begin with the raw amino-acid sequence, 560 residues long: Oxygen-dependent choline dehydrogenase (560 aa).

Position 8 to 37 (8 to 37 (DYIIIGAGSAGNVLATRLTEDADVSVLLLE)) interacts with FAD. The active-site Proton acceptor is the His475.

This sequence belongs to the GMC oxidoreductase family. The cofactor is FAD.

It catalyses the reaction choline + A = betaine aldehyde + AH2. The enzyme catalyses betaine aldehyde + NAD(+) + H2O = glycine betaine + NADH + 2 H(+). The protein operates within amine and polyamine biosynthesis; betaine biosynthesis via choline pathway; betaine aldehyde from choline (cytochrome c reductase route): step 1/1. Involved in the biosynthesis of the osmoprotectant glycine betaine. Catalyzes the oxidation of choline to betaine aldehyde and betaine aldehyde to glycine betaine at the same rate. In Stenotrophomonas maltophilia (strain K279a), this protein is Oxygen-dependent choline dehydrogenase.